The following is a 154-amino-acid chain: Iron-sulfur cluster assembly enzyme IscU (154 aa).

Belongs to the NifU family. As to quaternary structure, component of the mitochondrial core iron-sulfur cluster (ISC) assembly complex at least composed of the cystein desulfurase Nfs1, the scaffold protein IscU, the accessory protein bcn92/Isd11/Lyrm4, and probably fh/frataxin. Interacts with Nfs1. Fe(2+) is required as a cofactor. It depends on [2Fe-2S] cluster as a cofactor.

It participates in cofactor biosynthesis; iron-sulfur cluster biosynthesis. Functionally, scaffold protein for the de novo synthesis of iron-sulfur (Fe-S) clusters within mitochondria, which is required for maturation of both mitochondrial and cytoplasmic [2Fe-2S] and [4Fe-4S] proteins. Component of the mitochondrial core iron-sulfur cluster (ISC) assembly complex; regulates its activity. In Drosophila melanogaster (Fruit fly), this protein is Iron-sulfur cluster assembly enzyme IscU.